A 301-amino-acid polypeptide reads, in one-letter code: uncharacterized protein (301 aa).

The next 9 helical transmembrane spans lie at 1–21 (MSWI…LRII), 33–53 (SVLF…YVYY), 72–92 (AMSL…KIPW), 101–121 (FGII…IILI), 124–144 (FAWL…KTFY), 194–214 (VLIE…IFAI), 220–240 (IIYT…FCLA), 253–273 (LALI…IAIP), and 274–294 (EYVA…ASII).

It belongs to the TerC family.

Its subcellular location is the cell membrane. This is an uncharacterized protein from Rickettsia conorii (strain ATCC VR-613 / Malish 7).